Consider the following 385-residue polypeptide: Linearmycin resistance permease protein LnrN (385 aa).

A run of 6 helical transmembrane segments spans residues 22-42 (YLIM…MLSG), 198-218 (AAGF…GTIL), 239-259 (IGAG…GILL), 274-294 (AAVI…GLMI), 305-325 (LAFG…YWPI), and 360-380 (DILG…AAGL). An ABC transmembrane type-2 domain is found at 163 to 382 (KTVFAKKHED…AITFAAGLKA (220 aa)).

This sequence belongs to the ABC-2 integral membrane protein family. As to quaternary structure, the complex is composed of two ATP-binding proteins (LnrL) and two transmembrane proteins (LnrM and LnrN).

It localises to the cell membrane. Functionally, required for resistance to linearmycins, a family of antibiotic-specialized metabolites produced by some streptomycetes. Part of the ABC transporter complex LnrLMN that probably facilitates linearmycin removal from the membrane. Responsible for the translocation of the substrate across the membrane. Also mediates KinC-dependent biofilm morphology. This Bacillus subtilis (strain 168) protein is Linearmycin resistance permease protein LnrN.